An 873-amino-acid polypeptide reads, in one-letter code: Probable beta-glucosidase A (873 aa).

A signal peptide spans 1–19 (MRFGWLEVAALTAASVANA). Residues Asn71, Asn222, and Asn263 are each glycosylated (N-linked (GlcNAc...) asparagine). Asp291 is an active-site residue. N-linked (GlcNAc...) asparagine glycosylation is found at Asn326, Asn333, Asn365, Asn453, Asn534, Asn553, Asn575, Asn679, and Asn725. Residues 731-764 (DSSDDPNYGWEDSEYIPEGARDGSPQPLLKAGGA) are disordered.

Belongs to the glycosyl hydrolase 3 family.

Its subcellular location is the secreted. The catalysed reaction is Hydrolysis of terminal, non-reducing beta-D-glucosyl residues with release of beta-D-glucose.. It functions in the pathway glycan metabolism; cellulose degradation. Functionally, beta-glucosidases are one of a number of cellulolytic enzymes involved in the degradation of cellulosic biomass. Catalyzes the last step releasing glucose from the inhibitory cellobiose. The chain is Probable beta-glucosidase A (bglA) from Aspergillus fumigatus (strain CBS 144.89 / FGSC A1163 / CEA10) (Neosartorya fumigata).